A 491-amino-acid chain; its full sequence is Probable cytosol aminopeptidase (491 aa).

Mn(2+)-binding residues include lysine 264 and aspartate 269. The active site involves lysine 276. The Mn(2+) site is built by aspartate 287, aspartate 346, and glutamate 348. Residue arginine 350 is part of the active site.

Belongs to the peptidase M17 family. Mn(2+) serves as cofactor.

It localises to the cytoplasm. The catalysed reaction is Release of an N-terminal amino acid, Xaa-|-Yaa-, in which Xaa is preferably Leu, but may be other amino acids including Pro although not Arg or Lys, and Yaa may be Pro. Amino acid amides and methyl esters are also readily hydrolyzed, but rates on arylamides are exceedingly low.. It carries out the reaction Release of an N-terminal amino acid, preferentially leucine, but not glutamic or aspartic acids.. Presumably involved in the processing and regular turnover of intracellular proteins. Catalyzes the removal of unsubstituted N-terminal amino acids from various peptides. This is Probable cytosol aminopeptidase from Xylella fastidiosa (strain M12).